Reading from the N-terminus, the 291-residue chain is MEEGTGEYTKRVVVHALEDILHQELRVLDKGFVRVVDYMGSDESVVQAARVSYGRGTKRTSQDAALIGYLMRHAHTSPFEMCEIKLHVKLPIFVARQWVRHRTASINEYSARYSVLDREFYIPDEKQIAEQSTNNAQGRGTPLPADAAKRIMELFRRNSELMYEDYEALLEQGLARELARMNLTINCYTQWYWKVNLHNLLRFLALRSGAGAQYEIREYASRILEIVRLWVPMVHAAFVEYHLESSTISRSALVVVRKMLQGEKVSMEESGLGRREWGELMSVLYPDGEPE.

One can recognise a ThyX domain in the interval 31–241 (GFVRVVDYMG…PMVHAAFVEY (211 aa)). Residues Ser77, 100–102 (RHR), and Glu108 contribute to the FAD site. Residues 97–100 (QWVR), 108–112 (EYSAR), and Arg180 contribute to the dUMP site. The ThyX motif signature appears at 100 to 110 (RHRTASINEYS). Position 196-198 (196-198 (NLH)) interacts with FAD. Arg207 lines the dUMP pocket. Catalysis depends on Arg207, which acts as the Involved in ionization of N3 of dUMP, leading to its activation.

It belongs to the thymidylate synthase ThyX family. In terms of assembly, homotetramer. FAD is required as a cofactor.

The enzyme catalyses dUMP + (6R)-5,10-methylene-5,6,7,8-tetrahydrofolate + NADPH + H(+) = dTMP + (6S)-5,6,7,8-tetrahydrofolate + NADP(+). The protein operates within pyrimidine metabolism; dTTP biosynthesis. Catalyzes the reductive methylation of 2'-deoxyuridine-5'-monophosphate (dUMP) to 2'-deoxythymidine-5'-monophosphate (dTMP) while utilizing 5,10-methylenetetrahydrofolate (mTHF) as the methyl donor, and NADPH and FADH(2) as the reductant. This Anaplasma marginale (strain St. Maries) protein is Flavin-dependent thymidylate synthase.